The primary structure comprises 301 residues: Probable alpha-L-glutamate ligase (301 aa).

The ATP-grasp domain maps to 104 to 287 (MQLLSRKGIG…VAGLIVDFIE (184 aa)). Residues lysine 141, 178 to 179 (EF), aspartate 187, and 211 to 213 (RSN) each bind ATP. 3 residues coordinate Mg(2+): aspartate 248, glutamate 260, and asparagine 262. Mn(2+)-binding residues include aspartate 248, glutamate 260, and asparagine 262.

This sequence belongs to the RimK family. Requires Mg(2+) as cofactor. Mn(2+) is required as a cofactor.

This chain is Probable alpha-L-glutamate ligase, found in Aliivibrio salmonicida (strain LFI1238) (Vibrio salmonicida (strain LFI1238)).